The following is a 366-amino-acid chain: Cell division protein FtsZ 1 (366 aa).

GTP is bound by residues 45 to 49 (GAGCN), 132 to 134 (GTG), E163, R167, and D210. A compositionally biased stretch (acidic residues) spans 344–354 (PEEETPLETPE). Residues 344–366 (PEEETPLETPEESPSIEISIPEL) are disordered. A compositionally biased stretch (low complexity) spans 355 to 366 (ESPSIEISIPEL).

It belongs to the FtsZ family. As to quaternary structure, homodimer. Polymerizes to form a dynamic ring structure in a strictly GTP-dependent manner. Interacts directly with several other division proteins.

The protein resides in the cytoplasm. Its function is as follows. Essential cell division protein that forms a contractile ring structure (Z ring) at the future cell division site. The regulation of the ring assembly controls the timing and the location of cell division. One of the functions of the FtsZ ring is to recruit other cell division proteins to the septum to produce a new cell wall between the dividing cells. Binds GTP and shows GTPase activity. This chain is Cell division protein FtsZ 1, found in Pyrococcus woesei.